We begin with the raw amino-acid sequence, 763 residues long: 1,4-alpha-glucan branching enzyme GlgB (763 aa).

Residue Asp-437 is the Nucleophile of the active site. Glu-488 functions as the Proton donor in the catalytic mechanism.

The protein belongs to the glycosyl hydrolase 13 family. GlgB subfamily. In terms of assembly, monomer.

It catalyses the reaction Transfers a segment of a (1-&gt;4)-alpha-D-glucan chain to a primary hydroxy group in a similar glucan chain.. It functions in the pathway glycan biosynthesis; glycogen biosynthesis. Catalyzes the formation of the alpha-1,6-glucosidic linkages in glycogen by scission of a 1,4-alpha-linked oligosaccharide from growing alpha-1,4-glucan chains and the subsequent attachment of the oligosaccharide to the alpha-1,6 position. This Synechococcus sp. (strain JA-2-3B'a(2-13)) (Cyanobacteria bacterium Yellowstone B-Prime) protein is 1,4-alpha-glucan branching enzyme GlgB.